The chain runs to 485 residues: Metalloprotease AprA (485 aa).

Histidine 187 lines the Zn(2+) pocket. Residue glutamate 188 is part of the active site. Positions 191 and 197 each coordinate Zn(2+). Arginine 268, glycine 270, threonine 272, aspartate 300, glycine 302, glycine 303, aspartate 305, threonine 342, glutamate 344, glycine 349, glycine 351, aspartate 353, asparagine 358, leucine 360, asparagine 362, glycine 366, glycine 367, alanine 368, glycine 369, aspartate 371, glycine 375, glycine 376, glycine 377, glycine 378, aspartate 380, glycine 384, glycine 385, threonine 386, glycine 387, aspartate 389, aspartate 398, aspartate 405, aspartate 415, aspartate 461, threonine 463, asparagine 465, serine 467, and aspartate 469 together coordinate Ca(2+). 3 Hemolysin-type calcium-binding repeats span residues phenylalanine 347–leucine 364, lysine 365–leucine 382, and tryptophan 383–alanine 395.

The protein belongs to the peptidase M10B family. Ca(2+) is required as a cofactor. It depends on Zn(2+) as a cofactor.

Its subcellular location is the secreted. Functionally, secreted protease which is important for P.entomophila to counteract the local immune response of Drosophila. Can degrade antimicrobial peptides (AMPs), e.g. Diptericin and Cecropin A. Thus, protects P.entomophila from the Drosophila antimicrobial peptides produced by the gut innate immune response, and promotes bacterial persistence in the Drosophila gut and killing of the host. Is responsible for maturation of pro-Monalysin to the active toxin Monalysin, by cleaving its N-terminus. This Pseudomonas entomophila (strain L48) protein is Metalloprotease AprA.